Here is a 148-residue protein sequence, read N- to C-terminus: MPHFLILNGPNVNRLGSREPEVFGRQTLTDIETDLFQFAEALHIQLTFFQSNHEGDLIDAIHEAEEQYSGIVLNPGALSHYSYAIRDAVSSISLPVVEVHLSNLYAREEFRHQSVIAPVAKGQIVGLGAEGYKLAVRYLLSQQGGESR.

N74, H80, and D87 together coordinate substrate. H100 serves as the catalytic Proton donor. Residues 101–102 (LS) and R111 each bind substrate.

This sequence belongs to the type-II 3-dehydroquinase family. As to quaternary structure, homododecamer.

It carries out the reaction 3-dehydroquinate = 3-dehydroshikimate + H2O. It functions in the pathway metabolic intermediate biosynthesis; chorismate biosynthesis; chorismate from D-erythrose 4-phosphate and phosphoenolpyruvate: step 3/7. This chain is 3-dehydroquinate dehydratase (yqhS), found in Bacillus subtilis (strain 168).